Reading from the N-terminus, the 557-residue chain is Putative sensory transducer protein (557 aa).

The helical transmembrane segment at Thr-122–Ile-145 threads the bilayer. The HAMP domain maps to Arg-147–Tyr-199. The region spanning Val-243 to Ser-472 is the Methyl-accepting transducer domain. Gln-268 carries the post-translational modification Glutamate methyl ester (Gln). A Glutamate methyl ester (Glu) modification is found at Glu-274. Glutamate methyl ester (Gln) is present on Gln-281. Glu-463 is modified (glutamate methyl ester (Glu)). Over residues Asp-511–Gly-541 the composition is skewed to basic and acidic residues. The interval Asp-511–Gly-542 is disordered.

This sequence belongs to the methyl-accepting chemotaxis (MCP) protein family.

It is found in the cell membrane. Its function is as follows. May bind attractants or detect changes in the extracellular concentration of soluble sugars. The sequence is that of Putative sensory transducer protein from Acetivibrio thermocellus (strain ATCC 27405 / DSM 1237 / JCM 9322 / NBRC 103400 / NCIMB 10682 / NRRL B-4536 / VPI 7372) (Clostridium thermocellum).